The sequence spans 176 residues: Imidazoleglycerol-phosphate dehydratase (176 aa).

It belongs to the imidazoleglycerol-phosphate dehydratase family.

It localises to the cytoplasm. It catalyses the reaction D-erythro-1-(imidazol-4-yl)glycerol 3-phosphate = 3-(imidazol-4-yl)-2-oxopropyl phosphate + H2O. It functions in the pathway amino-acid biosynthesis; L-histidine biosynthesis; L-histidine from 5-phospho-alpha-D-ribose 1-diphosphate: step 6/9. The chain is Imidazoleglycerol-phosphate dehydratase from Pyrococcus furiosus (strain ATCC 43587 / DSM 3638 / JCM 8422 / Vc1).